An 86-amino-acid chain; its full sequence is Acyl carrier protein (86 aa).

The Carrier domain maps to 2–82; the sequence is ATVFERVKKV…AVVDYLKSKG (81 aa). The residue at position 37 (Ser37) is an O-(pantetheine 4'-phosphoryl)serine.

Belongs to the acyl carrier protein (ACP) family. In terms of processing, 4'-phosphopantetheine is transferred from CoA to a specific serine of apo-ACP by AcpS. This modification is essential for activity because fatty acids are bound in thioester linkage to the sulfhydryl of the prosthetic group.

It localises to the cytoplasm. It participates in lipid metabolism; fatty acid biosynthesis. In terms of biological role, carrier of the growing fatty acid chain in fatty acid biosynthesis. This Dehalococcoides mccartyi (strain ATCC BAA-2100 / JCM 16839 / KCTC 5957 / BAV1) protein is Acyl carrier protein.